Consider the following 227-residue polypeptide: Uracil-DNA glycosylase (227 aa).

Aspartate 64 (proton acceptor) is an active-site residue.

It belongs to the uracil-DNA glycosylase (UDG) superfamily. UNG family.

Its subcellular location is the cytoplasm. The catalysed reaction is Hydrolyzes single-stranded DNA or mismatched double-stranded DNA and polynucleotides, releasing free uracil.. Excises uracil residues from the DNA which can arise as a result of misincorporation of dUMP residues by DNA polymerase or due to deamination of cytosine. The protein is Uracil-DNA glycosylase of Alkaliphilus metalliredigens (strain QYMF).